The primary structure comprises 780 residues: Zinc finger and SCAN domain-containing protein 10 (780 aa).

Residues 1 to 38 are disordered; sequence MLGESVPAAVEQEQLGEVKLEEEEAVSPEDPRRPESRL. Residues 29-38 show a composition bias toward basic and acidic residues; the sequence is EDPRRPESRL. The region spanning 56-126 is the SCAN box domain; it reads MGPRASLSRL…LLLEGIHREP (71 aa). Disordered stretches follow at residues 153-237 and 255-324; these read GCAS…SRDQ and KAWP…GSLL. Phosphoserine is present on residues S162 and S208. Over residues 202-224 the composition is skewed to polar residues; that stretch reads SSKQPLSPGPQKTFQALQESSPQ. Residue T268 is modified to Phosphothreonine. Positions 268–280 are enriched in basic and acidic residues; the sequence is TPDKEEFKQEEPK. 14 C2H2-type zinc fingers span residues 347-370, 376-398, 404-426, 432-454, 476-498, 522-544, 550-572, 578-600, 606-628, 634-656, 662-684, 690-712, 724-746, and 752-774; these read FICA…LRSH, FLCL…MRTH, HACH…LLTH, FLCA…LLAH, VLCS…LRIH, FVCS…RRVH, FSCQ…QRVH, YACP…LLTH, HHCT…QRSH, CRCS…QRIH, HACD…RRSH, YSCQ…LATH, QECV…LLVH, and YSCT…LRTH. Q483 is subject to N5-methylglutamine. A disordered region spans residues 492 to 520; it reads KRHLRIHARDKDRRSSEGSGSRRRDSDRR. Over residues 498-520 the composition is skewed to basic and acidic residues; that stretch reads HARDKDRRSSEGSGSRRRDSDRR.

Interacts with POU5F1/OCT4 and SOX2. In terms of processing, methylated at Gln-483 by N6AMT1.

It localises to the nucleus. Its function is as follows. Embryonic stem (ES) cell-specific transcription factor required to maintain ES cell pluripotency. Can both activate and /or repress expression of target genes, depending on the context. Specifically binds the 5'-[GA]CGCNNGCG[CT]-3' DNA consensus sequence. Regulates expression of POU5F1/OCT4, ZSCAN4 and ALYREF/THOC4. The chain is Zinc finger and SCAN domain-containing protein 10 (ZSCAN10) from Homo sapiens (Human).